The chain runs to 432 residues: Keratin, type I cytoskeletal 17 (432 aa).

The interval 1 to 24 is disordered; sequence MTTTIRQFTSSSSIKGSSGLGGGS. The segment at 1 to 83 is head; the sequence is MTTTIRQFTS…GGVDGLLAGG (83 aa). A phosphoserine mark is found at Ser12 and Ser13. A Glycyl lysine isopeptide (Lys-Gly) (interchain with G-Cter in SUMO1); alternate cross-link involves residue Lys15. Residue Lys15 forms a Glycyl lysine isopeptide (Lys-Gly) (interchain with G-Cter in SUMO2); alternate linkage. A phosphoserine mark is found at Ser25, Ser32, and Ser39. Residue Ser44 is modified to Phosphoserine; by RPS6KA1. The interval 84–120 is coil 1A; the sequence is EKATMQNLNDRLASYLDKVRALEEANTELEVKIRDWY. The IF rod domain occupies 84–395; it reads EKATMQNLND…RLLEGEDAHL (312 aa). Position 110 is a phosphothreonine (Thr110). Residues 121–138 are linker 1; that stretch reads QRQAPGPARDYSQYYRTI. The tract at residues 139–230 is coil 1B; it reads EELQNKILTA…NHEEEMNALR (92 aa). A linker 12 region spans residues 231–250; that stretch reads GQVGGEINVEMDAAPGVDLS. Residues 251-392 form a coil 2 region; sequence RILNEMRDQY…TYRRLLEGED (142 aa). Lys278 is covalently cross-linked (Glycyl lysine isopeptide (Lys-Gly) (interchain with G-Cter in SUMO2)). The residue at position 279 (Thr279) is a Phosphothreonine. Position 323 is a phosphoserine (Ser323). The tract at residues 393–432 is tail; it reads AHLTQYKKEPVTTRQVRTIVEEVQDGKVISSREQVHQTTR. Residues Lys399, Lys400, and Lys419 each participate in a glycyl lysine isopeptide (Lys-Gly) (interchain with G-Cter in SUMO1); alternate cross-link. Glycyl lysine isopeptide (Lys-Gly) (interchain with G-Cter in SUMO2); alternate cross-links involve residues Lys399, Lys400, and Lys419.

It belongs to the intermediate filament family. Heterodimer of a type I and a type II keratin. KRT17 associates with KRT6 isomers (KRT6A or KRT6B). Interacts with TRADD and SFN. Post-translationally, phosphorylation at Ser-44 occurs in a growth- and stress-dependent fashion in skin keratinocytes, it has no effect on filament organization.

Its subcellular location is the cytoplasm. In terms of biological role, type I keratin involved in the formation and maintenance of various skin appendages, specifically in determining shape and orientation of hair. Required for the correct growth of hair follicles, in particular for the persistence of the anagen (growth) state. Modulates the function of TNF-alpha in the specific context of hair cycling. Regulates protein synthesis and epithelial cell growth through binding to the adapter protein SFN and by stimulating Akt/mTOR pathway. Involved in tissue repair. May be a marker of basal cell differentiation in complex epithelia and therefore indicative of a certain type of epithelial 'stem cells'. Acts as a promoter of epithelial proliferation by acting a regulator of immune response in skin: promotes Th1/Th17-dominated immune environment contributing to the development of basaloid skin tumors. May act as an autoantigen in the immunopathogenesis of psoriasis, with certain peptide regions being a major target for autoreactive T-cells and hence causing their proliferation. The sequence is that of Keratin, type I cytoskeletal 17 from Pan troglodytes (Chimpanzee).